The primary structure comprises 116 residues: Prefoldin subunit beta (116 aa).

Belongs to the prefoldin subunit beta family. Heterohexamer of two alpha and four beta subunits.

It is found in the cytoplasm. Functionally, molecular chaperone capable of stabilizing a range of proteins. Seems to fulfill an ATP-independent, HSP70-like function in archaeal de novo protein folding. This Thermococcus onnurineus (strain NA1) protein is Prefoldin subunit beta.